The chain runs to 357 residues: Putative F-box/kelch-repeat protein At5g38680 (357 aa).

One can recognise an F-box domain in the interval 14–61; that stretch reads NSNPSLPDALIISCIARVSRLYYPILSFVSKSFRSLLASPELYKERSL. Kelch repeat units follow at residues 131 to 175, 177 to 224, 226 to 267, and 268 to 313; these read NIYN…VLDG, IYVA…SKSL, IDEK…YCEI, and ENVL…GGKK.

The protein is Putative F-box/kelch-repeat protein At5g38680 of Arabidopsis thaliana (Mouse-ear cress).